A 450-amino-acid polypeptide reads, in one-letter code: Signal recognition particle 54 kDa protein (450 aa).

GTP-binding positions include 107–114 (GIQGSGKT), 188–192 (DTAGR), and 247–250 (TKLD).

Belongs to the GTP-binding SRP family. SRP54 subfamily. As to quaternary structure, part of the signal recognition particle protein translocation system, which is composed of SRP and FtsY. Archaeal SRP consists of a 7S RNA molecule of 300 nucleotides and two protein subunits: SRP54 and SRP19.

It localises to the cytoplasm. The enzyme catalyses GTP + H2O = GDP + phosphate + H(+). Functionally, involved in targeting and insertion of nascent membrane proteins into the cytoplasmic membrane. Binds to the hydrophobic signal sequence of the ribosome-nascent chain (RNC) as it emerges from the ribosomes. The SRP-RNC complex is then targeted to the cytoplasmic membrane where it interacts with the SRP receptor FtsY. This Methanococcus maripaludis (strain C6 / ATCC BAA-1332) protein is Signal recognition particle 54 kDa protein.